Consider the following 970-residue polypeptide: MTSRIQPKSGGYLLSKSDFTKVFEDVPKIAITSSVDLRNKFDNVKTILSNTSEDWNKRQTQLKTIRSLIINGEKLVDRPTMIAHILQLLGCFELAVKDLRSQILREAAITCSFIVSKYGIETHSIGEDILIPAMGQVAVSTKIMATSASTLTEFIVEYIQTRQVFTILSSFSTSKDKNQRRQLAVLLEIIIGKWSDRLKKQIIRQICELVKSAINDADSETRAAGRRAFAKLEEFHSEEADALFLELENSKQKMLRGGDAASSWASINSDKGSIPIRSKLSAGAKGYSNISAKFLAQRSASAIDPKALKVTGPSRLARPLSTKAMVRQDTSPAGSKIPYPNRPGSRTRTSSITSNDSRDTSPTRRHSPLPPDTQKARVKYGNGSFFAKLGMSDNTDDDEFLLPIRVRSPQKPNLGDSPADNVSRVLKECCSSSVTEKKDGIKKLLPIVSDTTLSSTEIKNIGNCLNRLLSDASNTKLILQMVLEVYAVFIRTHSSRLSEWLRLALAKLFARKATETLPNTKKQINHTLNVILECFNAHHQLVTVCELMCDPIHLMVPKARVALLEYMTSLLDEYTEPGASINHKELKAALRKMFTWIGDQRQSILLTPYIEKAICSMFCVNVADFSALISEFDSDQKAWLHQTLQLNGLENGISSGSGGSGNNHPKATPLRETPHKNDSVVLPEFGSAQKRTAINLGSFNTSTNAALSKLEEQSTSRLMEKMNLNSTVTLPPDTLEKIQNVQDLLHKMRVSKDPDEQENAISQVYMKICDGGFGIWEQCYAKLLLNLFEILSTSRSENNKKMCLRILGKMCTAQAAKLFDSTEMAVCKVLDAAVNTNDATTALAVDDCLRTLATHLPLANIINIAKVILIQEPIDDERASLVLKMVTRLFEELPADELKNVVDDITPCVIKAYQSTSSSVRKTVVYCLVAMVNRVGEQRMAPHFTKLPKAMTNLIQVYVNRAISTSLPRL.

Disordered stretches follow at residues 314–377 (SRLA…QKAR) and 651–675 (NGIS…ETPH). The segment covering 344–355 (GSRTRTSSITSN) has biased composition (polar residues). One copy of the HEAT repeat lies at 905-943 (ITPCVIKAYQSTSSSVRKTVVYCLVAMVNRVGEQRMAPH).

It belongs to the CLASP family.

The protein resides in the cytoplasm. Its subcellular location is the cytoskeleton. Microtubule plus-end tracking protein that promotes the stabilization of dynamic microtubules. The polypeptide is Protein CLASP-3 (cls-3) (Caenorhabditis briggsae).